The primary structure comprises 193 residues: Peptidyl-tRNA hydrolase (193 aa).

Tyrosine 16 serves as a coordination point for tRNA. Histidine 21 serves as the catalytic Proton acceptor. 3 residues coordinate tRNA: tyrosine 66, asparagine 68, and asparagine 114.

It belongs to the PTH family. As to quaternary structure, monomer.

The protein resides in the cytoplasm. The enzyme catalyses an N-acyl-L-alpha-aminoacyl-tRNA + H2O = an N-acyl-L-amino acid + a tRNA + H(+). Its function is as follows. Hydrolyzes ribosome-free peptidyl-tRNAs (with 1 or more amino acids incorporated), which drop off the ribosome during protein synthesis, or as a result of ribosome stalling. In terms of biological role, catalyzes the release of premature peptidyl moieties from peptidyl-tRNA molecules trapped in stalled 50S ribosomal subunits, and thus maintains levels of free tRNAs and 50S ribosomes. This is Peptidyl-tRNA hydrolase from Geobacter sulfurreducens (strain ATCC 51573 / DSM 12127 / PCA).